Consider the following 260-residue polypeptide: ATP synthase subunit a (260 aa).

7 consecutive transmembrane segments (helical) span residues 29-49 (FSFT…LLLI), 95-115 (FFPC…QGMI), 124-144 (HFLI…IVGF), 151-171 (FFSF…LVLL), 191-211 (MMAG…MLCM), 213-233 (EIFY…LTGL), and 237-257 (VAIL…NDAI).

The protein belongs to the ATPase A chain family. As to quaternary structure, F-type ATPases have 2 components, CF(1) - the catalytic core - and CF(0) - the membrane proton channel. CF(1) has five subunits: alpha(3), beta(3), gamma(1), delta(1), epsilon(1). CF(0) has three main subunits: a, b and c.

It is found in the mitochondrion inner membrane. In terms of biological role, mitochondrial membrane ATP synthase (F(1)F(0) ATP synthase or Complex V) produces ATP from ADP in the presence of a proton gradient across the membrane which is generated by electron transport complexes of the respiratory chain. F-type ATPases consist of two structural domains, F(1) - containing the extramembraneous catalytic core and F(0) - containing the membrane proton channel, linked together by a central stalk and a peripheral stalk. During catalysis, ATP synthesis in the catalytic domain of F(1) is coupled via a rotary mechanism of the central stalk subunits to proton translocation. Key component of the proton channel; it may play a direct role in the translocation of protons across the membrane. The protein is ATP synthase subunit a (ATP6) of Brassica napus (Rape).